The following is a 301-amino-acid chain: Homoserine O-acetyltransferase (301 aa).

Cys-142 acts as the Acyl-thioester intermediate in catalysis. The substrate site is built by Lys-163 and Ser-192. His-235 acts as the Proton acceptor in catalysis. Glu-237 is an active-site residue. Residue Arg-249 participates in substrate binding.

It belongs to the MetA family.

The protein localises to the cytoplasm. It catalyses the reaction L-homoserine + acetyl-CoA = O-acetyl-L-homoserine + CoA. It participates in amino-acid biosynthesis; L-methionine biosynthesis via de novo pathway; O-acetyl-L-homoserine from L-homoserine: step 1/1. Functionally, transfers an acetyl group from acetyl-CoA to L-homoserine, forming acetyl-L-homoserine. The polypeptide is Homoserine O-acetyltransferase (Lachnoclostridium phytofermentans (strain ATCC 700394 / DSM 18823 / ISDg) (Clostridium phytofermentans)).